Here is a 1060-residue protein sequence, read N- to C-terminus: Outer capsid protein VP2 (1060 aa).

This sequence belongs to the orbivirus VP2 family.

It localises to the virion. In terms of biological role, the VP2 protein is one of the two proteins (with VP5) which constitute the virus particle outer capsid. It is the major target of the host immunogenic response. The protein is Outer capsid protein VP2 (Segment-2) of Camelus dromedarius (Dromedary).